The chain runs to 405 residues: L-carnitine CoA-transferase (405 aa).

CoA contacts are provided by Lys97 and Arg104. The Nucleophile role is filled by Asp169.

The protein belongs to the CoA-transferase III family. CaiB subfamily. In terms of assembly, homodimer.

It is found in the cytoplasm. It carries out the reaction crotonobetainyl-CoA + (R)-carnitine = crotonobetaine + (R)-carnitinyl-CoA. The catalysed reaction is 4-(trimethylamino)butanoyl-CoA + (R)-carnitine = (R)-carnitinyl-CoA + 4-(trimethylamino)butanoate. Its pathway is amine and polyamine metabolism; carnitine metabolism. In terms of biological role, catalyzes the reversible transfer of the CoA moiety from gamma-butyrobetainyl-CoA to L-carnitine to generate L-carnitinyl-CoA and gamma-butyrobetaine. Is also able to catalyze the reversible transfer of the CoA moiety from gamma-butyrobetainyl-CoA or L-carnitinyl-CoA to crotonobetaine to generate crotonobetainyl-CoA. The chain is L-carnitine CoA-transferase from Salmonella enteritidis PT4 (strain P125109).